Here is a 77-residue protein sequence, read N- to C-terminus: Conotoxin Mr8.2 (77 aa).

A signal peptide spans 1–16; that stretch reads MLRLITAAVLVSACLA. Residues 17-32 constitute a propeptide that is removed on maturation; it reads YPQKKRTPPQTRPTSR.

Belongs to the conotoxin B2 family. Post-translationally, contains 5 disulfide bonds. As to expression, expressed by the venom duct.

It localises to the secreted. This chain is Conotoxin Mr8.2, found in Conus marmoreus (Marble cone).